The chain runs to 256 residues: Thiazole synthase (256 aa).

K96 serves as the catalytic Schiff-base intermediate with DXP. Residues G157, 184–185 (AG), and 206–207 (NT) each bind 1-deoxy-D-xylulose 5-phosphate.

This sequence belongs to the ThiG family. Homotetramer. Forms heterodimers with either ThiH or ThiS.

It is found in the cytoplasm. It carries out the reaction [ThiS sulfur-carrier protein]-C-terminal-Gly-aminoethanethioate + 2-iminoacetate + 1-deoxy-D-xylulose 5-phosphate = [ThiS sulfur-carrier protein]-C-terminal Gly-Gly + 2-[(2R,5Z)-2-carboxy-4-methylthiazol-5(2H)-ylidene]ethyl phosphate + 2 H2O + H(+). It functions in the pathway cofactor biosynthesis; thiamine diphosphate biosynthesis. Functionally, catalyzes the rearrangement of 1-deoxy-D-xylulose 5-phosphate (DXP) to produce the thiazole phosphate moiety of thiamine. Sulfur is provided by the thiocarboxylate moiety of the carrier protein ThiS. In vitro, sulfur can be provided by H(2)S. This is Thiazole synthase from Brucella suis (strain ATCC 23445 / NCTC 10510).